The chain runs to 480 residues: MSTLPERVRERRPLVHAITNCVTMEWVARGLLAAGARPVMARDAAEAPVVAAAADALVLNLGTWSPGLQQAMLEAGQVAARRGIPVVLDPVGAGGTETRTRAALELLERVRVTAVRGNAGEILALAGRDGLVRGVDGPDGRPGPQTERAARAVARRFGCLVAVTGATDLVTDGRRTLAVRAGHPLMSQVPGTGCLATALVAAALAAGTGAGPAGRDRPMEDVDVVAEALLWAGWAGEQAASAASGPGTFAAAFLDRLALRGPLPPGRIAPPLSERLSLYVLVSGATPPDVLEAVLQAGCRMIQFREKRLPLPAQLEAAARVREACRRHGALLVVNDRVDLALAVGADGVHLGQEDLPVAAARRILGPDAVIGATCETAGEARAARDAGADYIGAGPVYVTPSKPDAGEPYGPDVVRRVSEAADLPVVGIGGIGPGRAAPVIAAGAAGVAVISAVLGAPDPGAAARAILDEVRRAKGEVSA.

Residues 1–287 are hydroxyethylthiazole kinase; the sequence is MSTLPERVRE…LYVLVSGATP (287 aa). Met-40 contributes to the 5-(2-hydroxyethyl)-4-methylthiazole binding site. Arg-116 and Thr-164 together coordinate ATP. Position 191 (Gly-191) interacts with 5-(2-hydroxyethyl)-4-methylthiazole. The segment at 288-480 is thiamine-phosphate synthase; it reads PDVLEAVLQA…VRRAKGEVSA (193 aa). 4-amino-2-methyl-5-(diphosphooxymethyl)pyrimidine-binding positions include 303–307 and Asn-335; that span reads QFREK. Residues Asp-336 and Asp-355 each coordinate Mg(2+). Thr-374 contacts 4-amino-2-methyl-5-(diphosphooxymethyl)pyrimidine. Residue 400–402 participates in 2-[(2R,5Z)-2-carboxy-4-methylthiazol-5(2H)-ylidene]ethyl phosphate binding; that stretch reads TPS. Residue Lys-403 participates in 4-amino-2-methyl-5-(diphosphooxymethyl)pyrimidine binding. 2-[(2R,5Z)-2-carboxy-4-methylthiazol-5(2H)-ylidene]ethyl phosphate is bound by residues Gly-431 and 451–452; that span reads IS.

This sequence in the N-terminal section; belongs to the Thz kinase family. In the C-terminal section; belongs to the thiamine-phosphate synthase family. The cofactor is Mg(2+).

The catalysed reaction is 5-(2-hydroxyethyl)-4-methylthiazole + ATP = 4-methyl-5-(2-phosphooxyethyl)-thiazole + ADP + H(+). It carries out the reaction 2-[(2R,5Z)-2-carboxy-4-methylthiazol-5(2H)-ylidene]ethyl phosphate + 4-amino-2-methyl-5-(diphosphooxymethyl)pyrimidine + 2 H(+) = thiamine phosphate + CO2 + diphosphate. It catalyses the reaction 2-(2-carboxy-4-methylthiazol-5-yl)ethyl phosphate + 4-amino-2-methyl-5-(diphosphooxymethyl)pyrimidine + 2 H(+) = thiamine phosphate + CO2 + diphosphate. The enzyme catalyses 4-methyl-5-(2-phosphooxyethyl)-thiazole + 4-amino-2-methyl-5-(diphosphooxymethyl)pyrimidine + H(+) = thiamine phosphate + diphosphate. The protein operates within cofactor biosynthesis; thiamine diphosphate biosynthesis; 4-methyl-5-(2-phosphoethyl)-thiazole from 5-(2-hydroxyethyl)-4-methylthiazole: step 1/1. It functions in the pathway cofactor biosynthesis; thiamine diphosphate biosynthesis; thiamine phosphate from 4-amino-2-methyl-5-diphosphomethylpyrimidine and 4-methyl-5-(2-phosphoethyl)-thiazole: step 1/1. Its function is as follows. Condenses 4-methyl-5-(beta-hydroxyethyl)thiazole monophosphate (THZ-P) and 2-methyl-4-amino-5-hydroxymethyl pyrimidine pyrophosphate (HMP-PP) to form thiamine monophosphate (TMP). The chain is Thiamine biosynthesis bifunctional protein ThiM/ThiE (thiM/thiE) from Symbiobacterium thermophilum (strain DSM 24528 / JCM 14929 / IAM 14863 / T).